The sequence spans 525 residues: MNRRYEKPPPLSVSSKGKKKHFVNHTAPNTPGNYERTQTSPTLSTARSHEPDDKLNYEIFSILESKFLFGYEDPRLLWIPQSPLRPGDSEAGPSPRSPLTPNGVVLPGTPSSSFRSPRGRICVLSIDGGGMRGLLAGKSLIYLEQMLKEKSGDPNARIADYFDVAAGSGVGGVFAAMIFATRDGNRPIFKAEDTWKFLVENAEGFYRSGSGSGGGGAGAAIKRVIRSGSGSGSSSVTAATAKLEKAMKASFADLTLKDTLKPILISCYDLSSTAPFLFSRADALESDSFDFRLRDICRATWAEPGTFDPVRTCSVDGKTRCVAVGGGLAMSNPTAAAITHVFHNKQEFPAVKGVEDLLVLSLGTGQLFEVNYDYEQVKNWRVKEWARPMARISGDGSAEFVDQAVAMGFGPYRSSNYVRIQANGSRLGACGPNVDTDPRAENVKKLTEIADEMLKQNNVESVLFGSKRIGEMSNSEKIEWFASELVIEQQRRSVRASPTVTLKQAVSKTNRNAINATLTLISKDR.

Positions 1 to 50 (MNRRYEKPPPLSVSSKGKKKHFVNHTAPNTPGNYERTQTSPTLSTARSHE) are disordered. Residues 26–46 (TAPNTPGNYERTQTSPTLSTA) show a composition bias toward polar residues. The PNPLA domain maps to 124–338 (LSIDGGGMRG…AMSNPTAAAI (215 aa)). A GXGXXG motif is present at residues 128-133 (GGGMRG). Ser168 serves as the catalytic Nucleophile.

It belongs to the patatin family. In terms of tissue distribution, specifically expressed in roots.

Functionally, possesses non-specific lipolytic acyl hydrolase (LAH) activity. Hydrolyzes phospholipids as well as galactolipids. May play a role in disease resistance. In Arabidopsis thaliana (Mouse-ear cress), this protein is Patatin-like protein 8 (PLP8).